Here is a 997-residue protein sequence, read N- to C-terminus: Protein translocase subunit SecA (997 aa).

ATP-binding positions include Gln-84, 102 to 106 (GEGKT), and Asp-582. The tract at residues 950–997 (PYVPVPEAKPEPSEVFGVERKRATPPPQPGLSRAERRRLMRQEKKRKK) is disordered. Residues 957 to 971 (AKPEPSEVFGVERKR) are compositionally biased toward basic and acidic residues. Positions 984-997 (ERRRLMRQEKKRKK) are enriched in basic residues.

It belongs to the SecA family. In terms of assembly, part of the essential Sec protein translocation apparatus which comprises SecA, SecYEG and auxiliary proteins SecDF. Other proteins may also be involved. Monomer and homodimer.

It is found in the cell inner membrane. Its subcellular location is the cytoplasm. It catalyses the reaction ATP + H2O + cellular proteinSide 1 = ADP + phosphate + cellular proteinSide 2.. In terms of biological role, part of the Sec protein translocase complex. Interacts with the SecYEG preprotein conducting channel. Has a central role in coupling the hydrolysis of ATP to the transfer of proteins into and across the cell membrane, serving as an ATP-driven molecular motor driving the stepwise translocation of polypeptide chains across the membrane. In Thermus thermophilus (strain ATCC 27634 / DSM 579 / HB8), this protein is Protein translocase subunit SecA.